An 86-amino-acid polypeptide reads, in one-letter code: Large ribosomal subunit protein eL43 (86 aa).

Positions 38, 41, 56, and 59 each coordinate Zn(2+). The C4-type zinc-finger motif lies at 38-59 (CPVCGRKAVRRISTGIWQCQKC).

The protein belongs to the eukaryotic ribosomal protein eL43 family. As to quaternary structure, part of the 50S ribosomal subunit. It depends on Zn(2+) as a cofactor.

This chain is Large ribosomal subunit protein eL43, found in Thermococcus kodakarensis (strain ATCC BAA-918 / JCM 12380 / KOD1) (Pyrococcus kodakaraensis (strain KOD1)).